A 215-amino-acid polypeptide reads, in one-letter code: Cytochrome c biogenesis ATP-binding export protein CcmA (215 aa).

An ABC transporter domain is found at 7 to 209 (LKIDRLACQR…ALTVLNLAQY (203 aa)). 39–46 (GHNGIGKT) contacts ATP.

It belongs to the ABC transporter superfamily. CcmA exporter (TC 3.A.1.107) family. The complex is composed of two ATP-binding proteins (CcmA) and two transmembrane proteins (CcmB).

The protein localises to the cell inner membrane. The enzyme catalyses heme b(in) + ATP + H2O = heme b(out) + ADP + phosphate + H(+). In terms of biological role, part of the ABC transporter complex CcmAB involved in the biogenesis of c-type cytochromes; once thought to export heme, this seems not to be the case, but its exact role is uncertain. Responsible for energy coupling to the transport system. The sequence is that of Cytochrome c biogenesis ATP-binding export protein CcmA from Mannheimia succiniciproducens (strain KCTC 0769BP / MBEL55E).